Consider the following 197-residue polypeptide: Probable GTP-binding protein EngB (197 aa).

The EngB-type G domain maps to 22-195; that stretch reads KRIEIAFVGR…LKVLESVIDF (174 aa). GTP is bound by residues 30-37, 57-61, 75-78, 142-145, and 174-176; these read GRSNVGKS, GKTRL, DLPG, TKVD, and FSS. The Mg(2+) site is built by serine 37 and threonine 59.

This sequence belongs to the TRAFAC class TrmE-Era-EngA-EngB-Septin-like GTPase superfamily. EngB GTPase family. It depends on Mg(2+) as a cofactor.

In terms of biological role, necessary for normal cell division and for the maintenance of normal septation. This chain is Probable GTP-binding protein EngB, found in Clostridium kluyveri (strain ATCC 8527 / DSM 555 / NBRC 12016 / NCIMB 10680 / K1).